The following is a 428-amino-acid chain: ATP-dependent RNA helicase RhlB (428 aa).

The Q motif signature appears at 9–37 (QKFSDFALHPLVVEALENKGFQYCTPIQA). The Helicase ATP-binding domain occupies 40–219 (LPLTLSGRDV…FEQMNNAEYV (180 aa)). 53–60 (AQTGTGKT) lines the ATP pocket. A DEAD box motif is present at residues 165–168 (DEAD). The Helicase C-terminal domain maps to 245–390 (RLLQTLIEEE…VSKYNSDALL (146 aa)). Residues 394 to 428 (PAPKRLARTRTGNGPRRNSAPRRSGAPRNNRKRPG) are disordered.

Belongs to the DEAD box helicase family. RhlB subfamily. In terms of assembly, component of the RNA degradosome, which is a multiprotein complex involved in RNA processing and mRNA degradation.

The protein localises to the cytoplasm. It carries out the reaction ATP + H2O = ADP + phosphate + H(+). Its function is as follows. DEAD-box RNA helicase involved in RNA degradation. Has RNA-dependent ATPase activity and unwinds double-stranded RNA. The polypeptide is ATP-dependent RNA helicase RhlB (Yersinia pseudotuberculosis serotype O:1b (strain IP 31758)).